The chain runs to 185 residues: ATP-dependent protease subunit HslV (185 aa).

The active site involves Thr-12. Residues Ala-168, Cys-171, and Thr-174 each coordinate Na(+).

Belongs to the peptidase T1B family. HslV subfamily. A double ring-shaped homohexamer of HslV is capped on each side by a ring-shaped HslU homohexamer. The assembly of the HslU/HslV complex is dependent on binding of ATP.

Its subcellular location is the cytoplasm. The enzyme catalyses ATP-dependent cleavage of peptide bonds with broad specificity.. With respect to regulation, allosterically activated by HslU binding. Protease subunit of a proteasome-like degradation complex believed to be a general protein degrading machinery. In Dinoroseobacter shibae (strain DSM 16493 / NCIMB 14021 / DFL 12), this protein is ATP-dependent protease subunit HslV.